The following is a 533-amino-acid chain: Inositol-3-phosphate synthase (533 aa).

Thr48 bears the Phosphothreonine mark. The NAD(+) site is built by Gly74, Gly75, Asn76, Asn77, and Asp148. Ser177 and Ser184 each carry phosphoserine. NAD(+)-binding residues include Ser184, Ile185, Gln195, Asp196, Arg198, Thr244, Ala245, Asn246, Thr247, Gly295, Ser296, Asp320, Leu321, Ser323, Asn354, Asn355, and Asp356. Residue Ser296 is modified to Phosphoserine. Ser368 is modified (phosphoserine). Lys369 contacts NAD(+). Position 374 is a phosphoserine (Ser374). Positions 409, 410, 438, and 439 each coordinate NAD(+).

This sequence belongs to the myo-inositol 1-phosphate synthase family. Homotetramer. Requires NAD(+) as cofactor. Phosphorylation at Ser-184 and Ser-374 is associated with a decrease in activity. Increasingly phosphorylated in presence of valproate.

The protein resides in the cytoplasm. It catalyses the reaction D-glucose 6-phosphate = 1D-myo-inositol 3-phosphate. The protein operates within polyol metabolism; myo-inositol biosynthesis; myo-inositol from D-glucose 6-phosphate: step 1/2. With respect to regulation, competitively inhibited by myo-2-inosose 1-phosphate, which is also an intermediate in the catalytic reaction. Competitively inhibited by 2-deoxy-myo-inositol 1-phosphate (dMIP), 1-deoxy-1-(phosphonomethyl)-myo-2-inosose (DPMI), dihydroxyacetone phosphate (DHAP), 6-deoxy-D-glucose 6-(E)-vinylhomophosphonate, 6-deoxy-D-glucitol 6-(E)-vinylhomophosphonate, 2,6-dideoxy-D-glucose 6-(E)-vinylhomophosphonate and 2,6-dideoxy-D-glucitol 6-(E)-vinylhomophosphonate. Inhibited by 2-deoxyglucitol 6-phosphate (dgtolP). Key enzyme in myo-inositol biosynthesis pathway that catalyzes the conversion of glucose 6-phosphate to 1-myo-inositol 1-phosphate in a NAD-dependent manner. Rate-limiting enzyme in the synthesis of all inositol-containing compounds. This is Inositol-3-phosphate synthase (INO1) from Saccharomyces cerevisiae (strain ATCC 204508 / S288c) (Baker's yeast).